The sequence spans 549 residues: Cation/acetate symporter ActP (549 aa).

Helical transmembrane passes span 33 to 53 (WQAI…TYWA), 77 to 97 (LAIA…ALVF), 103 to 123 (GLIY…LIAE), 148 to 168 (ILSA…QMVG), 183 to 203 (IAVV…GMLA), 206 to 226 (WVQI…AFMV), 262 to 282 (ISAL…PHIL), 303 to 323 (GFMG…IMLV), 355 to 375 (LFLG…VAGL), 404 to 424 (VSKI…VLFE), 428 to 448 (IAFM…PIIL), 464 to 484 (GGWL…TIWV), and 493 to 513 (IFPY…GIWF).

It belongs to the sodium:solute symporter (SSF) (TC 2.A.21) family.

It is found in the cell inner membrane. Its function is as follows. Transports acetate. This chain is Cation/acetate symporter ActP, found in Escherichia coli O17:K52:H18 (strain UMN026 / ExPEC).